The chain runs to 434 residues: Alpha-enolase (434 aa).

Serine 40 contacts Mg(2+). Substrate-binding residues include histidine 158 and glutamate 167. Residue glutamate 210 is the Proton donor of the active site. Aspartate 245, glutamate 293, and aspartate 318 together coordinate Mg(2+). Positions 293 and 318 each coordinate substrate. Residue lysine 343 is the Proton acceptor of the active site. Substrate-binding positions include 370-373 (SHRS) and lysine 394.

The protein belongs to the enolase family. In terms of assembly, homodimer. Mg(2+) is required as a cofactor.

The protein localises to the cytoplasm. It catalyses the reaction (2R)-2-phosphoglycerate = phosphoenolpyruvate + H2O. It functions in the pathway carbohydrate degradation; glycolysis; pyruvate from D-glyceraldehyde 3-phosphate: step 4/5. This is Alpha-enolase (ENO1) from Gallus gallus (Chicken).